Consider the following 868-residue polypeptide: DNA topoisomerase 1 (868 aa).

A Toprim domain is found at 3–148 (KSLVIVESPA…RFSRVVFNEI (146 aa)). Glutamate 9 and aspartate 117 together coordinate Mg(2+). The Topo IA-type catalytic domain maps to 164–581 (NMDRVNAQQT…QFFKDFSSQL (418 aa)). The interval 198–203 (SAGRVQ) is interaction with DNA. The active-site O-(5'-phospho-DNA)-tyrosine intermediate is the tyrosine 325. 3 consecutive C4-type zinc fingers follow at residues 605–636 (CPTC…KERC), 667–694 (CTKC…NPNC), and 716–739 (CDKC…CTNC).

Belongs to the type IA topoisomerase family. In terms of assembly, monomer. The cofactor is Mg(2+).

The enzyme catalyses ATP-independent breakage of single-stranded DNA, followed by passage and rejoining.. In terms of biological role, releases the supercoiling and torsional tension of DNA, which is introduced during the DNA replication and transcription, by transiently cleaving and rejoining one strand of the DNA duplex. Introduces a single-strand break via transesterification at a target site in duplex DNA. The scissile phosphodiester is attacked by the catalytic tyrosine of the enzyme, resulting in the formation of a DNA-(5'-phosphotyrosyl)-enzyme intermediate and the expulsion of a 3'-OH DNA strand. The free DNA strand then undergoes passage around the unbroken strand, thus removing DNA supercoils. Finally, in the religation step, the DNA 3'-OH attacks the covalent intermediate to expel the active-site tyrosine and restore the DNA phosphodiester backbone. This Haemophilus influenzae (strain ATCC 51907 / DSM 11121 / KW20 / Rd) protein is DNA topoisomerase 1.